Here is a 473-residue protein sequence, read N- to C-terminus: Glutamate--tRNA ligase (473 aa).

Positions proline 11–glycine 21 match the 'HIGH' region motif. The short motif at lysine 240–arginine 244 is the 'KMSKS' region element. Lysine 243 provides a ligand contact to ATP.

This sequence belongs to the class-I aminoacyl-tRNA synthetase family. Glutamate--tRNA ligase type 1 subfamily. Monomer.

The protein resides in the cytoplasm. It carries out the reaction tRNA(Glu) + L-glutamate + ATP = L-glutamyl-tRNA(Glu) + AMP + diphosphate. Its function is as follows. Catalyzes the attachment of glutamate to tRNA(Glu) in a two-step reaction: glutamate is first activated by ATP to form Glu-AMP and then transferred to the acceptor end of tRNA(Glu). The protein is Glutamate--tRNA ligase of Rhodopseudomonas palustris (strain ATCC BAA-98 / CGA009).